The chain runs to 344 residues: L-rhamnose-proton symporter (344 aa).

Helical transmembrane passes span Ala-4–Ala-24, Trp-38–Leu-58, Phe-68–Ile-88, Met-101–Ile-121, Thr-137–Leu-157, Leu-175–Ala-195, Leu-214–Ile-234, Val-259–Gly-279, Ile-290–Leu-310, and Val-323–Ala-343.

It belongs to the L-rhamnose transporter (TC 2.A.7.6) family.

It is found in the cell inner membrane. It carries out the reaction L-rhamnopyranose(in) + H(+)(in) = L-rhamnopyranose(out) + H(+)(out). Its function is as follows. Uptake of L-rhamnose across the cytoplasmic membrane with the concomitant transport of protons into the cell (symport system). This chain is L-rhamnose-proton symporter, found in Escherichia coli O1:K1 / APEC.